The chain runs to 224 residues: 7-cyano-7-deazaguanine synthase (224 aa).

Residue Leu-9–Leu-19 participates in ATP binding. Cys-189, Cys-199, Cys-202, and Cys-205 together coordinate Zn(2+).

It belongs to the QueC family. It depends on Zn(2+) as a cofactor.

The catalysed reaction is 7-carboxy-7-deazaguanine + NH4(+) + ATP = 7-cyano-7-deazaguanine + ADP + phosphate + H2O + H(+). It functions in the pathway purine metabolism; 7-cyano-7-deazaguanine biosynthesis. Catalyzes the ATP-dependent conversion of 7-carboxy-7-deazaguanine (CDG) to 7-cyano-7-deazaguanine (preQ(0)). This chain is 7-cyano-7-deazaguanine synthase, found in Ralstonia pickettii (strain 12J).